The sequence spans 368 residues: Protein HGH1 homolog (368 aa).

It belongs to the HGH1 family.

The sequence is that of Protein HGH1 homolog from Drosophila pseudoobscura pseudoobscura (Fruit fly).